The primary structure comprises 342 residues: MKFLDLCKVYIRSGGGGGGCVSFRREKFIEFGGPDGGDGGNGGSVWAEAVDGLNTLIDFRYQQHFFAKSGQPGMGSQRTGRSGDDIVLKVPVGTEIIDEDEETVIADLTEVGQRVLLAQGGNGGWGNLRFKSSTNRAPARANPGQPGIDRTIWLRLKLIADAGLLGLPNAGKSTFLSATSNARPKIADYPFTTLVPNLGVVGVDGKEFVIADIPGLIEGASEGRGLGDQFLAHVERCSVLLHLVDGTSSTIVKDYRTIIGELEAYGGDLALKPRITAMNKIDAMDSKQISDRRRALEKATGGKVFTISGVAGTGLMDVLRALWAEIDGARGDKVEEHAPWQP.

The 159-residue stretch at 1–159 (MKFLDLCKVY…RTIWLRLKLI (159 aa)) folds into the Obg domain. Residues 160–327 (ADAGLLGLPN…VLRALWAEID (168 aa)) form the OBG-type G domain. GTP-binding positions include 166–173 (GLPNAGKS), 191–195 (FTTLV), 212–215 (DIPG), 279–282 (NKID), and 308–310 (SGV). Mg(2+)-binding residues include serine 173 and threonine 193.

This sequence belongs to the TRAFAC class OBG-HflX-like GTPase superfamily. OBG GTPase family. Monomer. Mg(2+) is required as a cofactor.

The protein localises to the cytoplasm. In terms of biological role, an essential GTPase which binds GTP, GDP and possibly (p)ppGpp with moderate affinity, with high nucleotide exchange rates and a fairly low GTP hydrolysis rate. Plays a role in control of the cell cycle, stress response, ribosome biogenesis and in those bacteria that undergo differentiation, in morphogenesis control. In Cereibacter sphaeroides (strain KD131 / KCTC 12085) (Rhodobacter sphaeroides), this protein is GTPase Obg.